Here is a 227-residue protein sequence, read N- to C-terminus: Cytochrome c oxidase subunit 2 (227 aa).

Topologically, residues 1-14 (MAYPVQLGFQDAAS) are mitochondrial intermembrane. The helical transmembrane segment at 15–45 (PIMEELLYFHDHTLMIMFLISSLVLYIISLM) threads the bilayer. Residues 46-59 (LTTELIHTSTMDAQ) lie on the Mitochondrial matrix side of the membrane. Residues 60-87 (EVETVWTILPAVILILIALPSLRILYMM) form a helical membrane-spanning segment. The Mitochondrial intermembrane segment spans residues 88 to 227 (DEISTPSLTL…HFEEWLLSML (140 aa)). Positions 161, 196, 198, 200, 204, and 207 each coordinate Cu cation. E198 serves as a coordination point for Mg(2+).

This sequence belongs to the cytochrome c oxidase subunit 2 family. As to quaternary structure, component of the cytochrome c oxidase (complex IV, CIV), a multisubunit enzyme composed of 14 subunits. The complex is composed of a catalytic core of 3 subunits MT-CO1, MT-CO2 and MT-CO3, encoded in the mitochondrial DNA, and 11 supernumerary subunits COX4I, COX5A, COX5B, COX6A, COX6B, COX6C, COX7A, COX7B, COX7C, COX8 and NDUFA4, which are encoded in the nuclear genome. The complex exists as a monomer or a dimer and forms supercomplexes (SCs) in the inner mitochondrial membrane with NADH-ubiquinone oxidoreductase (complex I, CI) and ubiquinol-cytochrome c oxidoreductase (cytochrome b-c1 complex, complex III, CIII), resulting in different assemblies (supercomplex SCI(1)III(2)IV(1) and megacomplex MCI(2)III(2)IV(2)). Found in a complex with TMEM177, COA6, COX18, COX20, SCO1 and SCO2. Interacts with TMEM177 in a COX20-dependent manner. Interacts with COX20. Interacts with COX16. The cofactor is Cu cation.

It is found in the mitochondrion inner membrane. The enzyme catalyses 4 Fe(II)-[cytochrome c] + O2 + 8 H(+)(in) = 4 Fe(III)-[cytochrome c] + 2 H2O + 4 H(+)(out). Its function is as follows. Component of the cytochrome c oxidase, the last enzyme in the mitochondrial electron transport chain which drives oxidative phosphorylation. The respiratory chain contains 3 multisubunit complexes succinate dehydrogenase (complex II, CII), ubiquinol-cytochrome c oxidoreductase (cytochrome b-c1 complex, complex III, CIII) and cytochrome c oxidase (complex IV, CIV), that cooperate to transfer electrons derived from NADH and succinate to molecular oxygen, creating an electrochemical gradient over the inner membrane that drives transmembrane transport and the ATP synthase. Cytochrome c oxidase is the component of the respiratory chain that catalyzes the reduction of oxygen to water. Electrons originating from reduced cytochrome c in the intermembrane space (IMS) are transferred via the dinuclear copper A center (CU(A)) of subunit 2 and heme A of subunit 1 to the active site in subunit 1, a binuclear center (BNC) formed by heme A3 and copper B (CU(B)). The BNC reduces molecular oxygen to 2 water molecules using 4 electrons from cytochrome c in the IMS and 4 protons from the mitochondrial matrix. This chain is Cytochrome c oxidase subunit 2 (MT-CO2), found in Eulemur macaco (Black lemur).